A 190-amino-acid chain; its full sequence is Potassium-transporting ATPase KdpC subunit (190 aa).

The chain crosses the membrane as a helical span at residues 10-30 (TFLFLLLITGGVYPLLTTALG).

The protein belongs to the KdpC family. In terms of assembly, the system is composed of three essential subunits: KdpA, KdpB and KdpC.

The protein resides in the cell inner membrane. Functionally, part of the high-affinity ATP-driven potassium transport (or Kdp) system, which catalyzes the hydrolysis of ATP coupled with the electrogenic transport of potassium into the cytoplasm. This subunit acts as a catalytic chaperone that increases the ATP-binding affinity of the ATP-hydrolyzing subunit KdpB by the formation of a transient KdpB/KdpC/ATP ternary complex. This is Potassium-transporting ATPase KdpC subunit from Escherichia coli O45:K1 (strain S88 / ExPEC).